Here is a 505-residue protein sequence, read N- to C-terminus: Flagellin (505 aa).

It belongs to the bacterial flagellin family.

It is found in the secreted. The protein resides in the bacterial flagellum. Flagellin is the subunit protein which polymerizes to form the filaments of bacterial flagella. The polypeptide is Flagellin (fliC) (Salmonella senftenberg).